A 471-amino-acid polypeptide reads, in one-letter code: Major facilitator-type transporter psiT1 (471 aa).

The tract at residues 1 to 36 (MNPTTATDAHERTSLLSGRPQSAANSTAPYERQVQP) is disordered. A compositionally biased stretch (polar residues) spans 14-36 (SLLSGRPQSAANSTAPYERQVQP). An N-linked (GlcNAc...) asparagine glycan is attached at asparagine 25. 8 helical membrane-spanning segments follow: residues 44 to 64 (TPVT…TMVI), 108 to 128 (AIMV…GTGI), 140 to 160 (PVLM…LTVQ), 168 to 188 (LVTF…TTVF), 212 to 232 (GWLV…TTFL), 237 to 257 (AVYI…AFVL), 322 to 342 (LHSF…LIFF), and 356 to 376 (VMTT…PLFI). The N-linked (GlcNAc...) asparagine glycan is linked to asparagine 384. Residues 424–444 (VHITVISWTIESLAYIVLGTV) traverse the membrane as a helical segment.

The protein belongs to the major facilitator superfamily. TCR/Tet family.

It is found in the membrane. Major facilitator-type transporter; part of the gene cluster that mediates the biosynthesis of psilocybin, a psychotropic tryptamine-derived natural product. This Psilocybe cyanescens protein is Major facilitator-type transporter psiT1.